The chain runs to 1022 residues: Sodium-dependent transporter snf-12 (1022 aa).

The Cytoplasmic segment spans residues 1–165 (MNGEWKSALR…RRELWRTQKD (165 aa)). A helical transmembrane segment spans residues 166-185 (FFLSCLGFMVGVGHTMRFPA). The Extracellular segment spans residues 186-192 (KVYQHGG). The chain crosses the membrane as a helical span at residues 193–213 (GVFFIPYLFSLIFFGLPLVFL). Topologically, residues 214-241 (HLSLGQYTGQAANTAFQRLMPIGSGVGW) are cytoplasmic. A helical membrane pass occupies residues 242–262 (ALVVIAIPVAVYYNIIVAWAI). Residues 263–337 (HYFFQSAKGL…DFALGPLQSH (75 aa)) lie on the Extracellular side of the membrane. Residues 338-358 (LVLSLAAAWLLVFFGVFKGLG) form a helical membrane-spanning segment. Position 359 (Ser-359) is a topological domain, cytoplasmic. A helical transmembrane segment spans residues 360–380 (IAQTMNVTATVPYLLLSILLL). Residues 381–412 (RGISLPGANKGLTFLFTVDSTKLWKWQIWKSA) are Extracellular-facing. Residues 413 to 433 (AEQVFYELGIDAGPLISMAAF) form a helical membrane-spanning segment. The Cytoplasmic portion of the chain corresponds to 434–444 (SRYRNNIYRDS). A helical transmembrane segment spans residues 445–465 (VLLVIMDALTSCLSGMVIFSF). Over 466 to 498 (VGFIASESNSNVNDVLKHDPLYLSFTVYPGVTS) the chain is Extracellular. The chain crosses the membrane as a helical span at residues 499-519 (FMYWGGLWATLFFGMLVLAAI). At 520 to 550 (DAEFAWLEMIASAFMNHFSMKNKAVENRLLA) the chain is on the cytoplasmic side. Residues 551-571 (FLCLAGFFLGLPLCAQGGIFV) form a helical membrane-spanning segment. Residues 572–584 (FHAIENLNANWNS) are Extracellular-facing. The helical transmembrane segment at 585–605 (FSLALLSVAIVCYVYGIDNYL) threads the bilayer. Topologically, residues 606–641 (TDISAMLRVPRIQISKATRLKEKLIYFFGPGGIYIK) are cytoplasmic. The helical transmembrane segment at 642-662 (FSLCFICPVILTVLLVASVLG) threads the bilayer. Topologically, residues 663 to 677 (YQRISFAGRPIPIDY) are extracellular. Residues 678-698 (EIVAWIVMIGPLLVVPLVAFM) form a helical membrane-spanning segment. The Cytoplasmic portion of the chain corresponds to 699–1022 (QIRQIRNEGK…RPKPIDMPPK (324 aa)). Disordered stretches follow at residues 867–948 (RIPN…SSDD) and 995–1022 (IYDQ…MPPK). Pro residues predominate over residues 893 to 907 (SDPPVPTSPLPPPPK). Residues 933–943 (DDSPSISNSSD) are compositionally biased toward low complexity.

Belongs to the sodium:neurotransmitter symporter (SNF) (TC 2.A.22) family. May interact with STAT family transcription factor sta-2; the interaction is probably direct.

It is found in the membrane. Its subcellular location is the cytoplasm. The protein resides in the vesicle. Its function is as follows. Probably mediates sodium-dependent uptake of unknown small molecule(s). By positively modulating expression, in the epidermis, of antimicrobial peptides such as nlp-29, plays a role in resistance to fungal infection and in the response to physical wounding and phorbol ester PMA treatment. Role in response to wounding of the epidermis may be facilitated by recruitment of snf-12 to the wound site by microtubule-dependent vesicle trafficking. Functions cell autonomously in the epidermis, in concert with STAT transcription factor sta-2, probably acting at vesicular membranes, downstream of a p38 MAPK/pmk-1 pathway. In Caenorhabditis elegans, this protein is Sodium-dependent transporter snf-12.